The primary structure comprises 296 residues: MLARFSRTAIKSGRYFSTSAKNTAPVSEAEEIEILKAVEAPQFKDAVKKTRQQYQDMISKLTNDESGKSITQSTGLRPTINISTPSGKIAHALFDAASSMRSVGIVAKELTQVKTIIDKTPGLKTALEGDIDNSEKTVMLELLQGSVTLSPVSGFFLYYMTYENNFKLINPALTDFKRLVGSLDTEMSIKLTVAHQYSEAEKKDLETNVKSFFPPETQFKFSYNVDPEIQKGYIIESPFINHDASYSTAVKKVKAQEQSVLAEFLNDIKNGIKNQTAVWETKEFRDKYLTLDESKN.

It belongs to the ATPase delta chain family. In terms of assembly, component of the ATP synthase complex composed at least of ATP5F1A/subunit alpha, ATP5F1B/subunit beta, ATP5MC1/subunit c (homooctomer), MT-ATP6/subunit a, MT-ATP8/subunit 8, ATP5ME/subunit e, ATP5MF/subunit f, ATP5MG/subunit g, ATP5MK/subunit k, ATP5MJ/subunit j, ATP5F1C/subunit gamma, ATP5F1D/subunit delta, ATP5F1E/subunit epsilon, ATP5PF/subunit F6, ATP5PB/subunit b, ATP5PD/subunit d, ATP5PO/subunit OSCP. ATP synthase complex consists of a soluble F(1) head domain (subunits alpha(3) and beta(3)) - the catalytic core - and a membrane F(0) domain - the membrane proton channel (subunits c, a, 8, e, f, g, k and j). These two domains are linked by a central stalk (subunits gamma, delta, and epsilon) rotating inside the F1 region and a stationary peripheral stalk (subunits F6, b, d, and OSCP).

It is found in the mitochondrion. It localises to the mitochondrion inner membrane. Functionally, subunit OSCP, of the mitochondrial membrane ATP synthase complex (F(1)F(0) ATP synthase or Complex V) that produces ATP from ADP in the presence of a proton gradient across the membrane which is generated by electron transport complexes of the respiratory chain. ATP synthase complex consist of a soluble F(1) head domain - the catalytic core - and a membrane F(1) domain - the membrane proton channel. These two domains are linked by a central stalk rotating inside the F(1) region and a stationary peripheral stalk. During catalysis, ATP synthesis in the catalytic domain of F(1) is coupled via a rotary mechanism of the central stalk subunits to proton translocation. In vivo, can only synthesize ATP although its ATP hydrolase activity can be activated artificially in vitro. Part of the complex F(0) domain. Part of the complex F(0) domain and the peripheric stalk, which acts as a stator to hold the catalytic alpha(3)beta(3) subcomplex and subunit a/ATP6 static relative to the rotary elements. In Dictyostelium discoideum (Social amoeba), this protein is ATP synthase peripheral stalk subunit OSCP, mitochondrial.